We begin with the raw amino-acid sequence, 355 residues long: Green-sensitive opsin (355 aa).

Residues 1–36 (MNGTEGINFYVPMSNKTGVVRSPFEYPQYYLAEPWK) are Extracellular-facing. 2 N-linked (GlcNAc...) asparagine glycosylation sites follow: asparagine 2 and asparagine 15. Residues 37–61 (YRLVCCYIFFLISTGLPINLLTLLV) form a helical membrane-spanning segment. Residues 62–73 (TFKHKKLRQPLN) are Cytoplasmic-facing. Residues 74 to 99 (YILVNLAVADLFMACFGFTVTFYTAW) form a helical membrane-spanning segment. Residues 100–113 (NGYFVFGPVGCAVE) are Extracellular-facing. Cysteine 110 and cysteine 187 are joined by a disulfide. Residues 114 to 133 (GFFATLGGQVALWSLVVLAI) form a helical membrane-spanning segment. The Cytoplasmic segment spans residues 134–152 (ERYIVVCKPMGNFRFSATH). A helical transmembrane segment spans residues 153–176 (AMMGIAFTWVMAFSCAAPPLFGWS). The Extracellular segment spans residues 177–202 (RYMPEGMQCSCGPDYYTHNPDYHNES). A helical transmembrane segment spans residues 203–230 (YVLYMFVIHFIIPVVVIFFSYGRLICKV). The Cytoplasmic portion of the chain corresponds to 231-252 (REAAAQQQESATTQKAEKEVTR). The chain crosses the membrane as a helical span at residues 253 to 276 (MVILMVLGFMLAWTPYAVVAFWIF). Topologically, residues 277-284 (TNKGADFT) are extracellular. A helical membrane pass occupies residues 285–309 (ATLMAVPAFFSKSSSLYNPIIYVLM). N6-(retinylidene)lysine is present on lysine 296. Residues 310–355 (NKQFRNCMITTICCGKNPFGDEDVSSTVSQSKTEVSSVSSSQVSPA) lie on the Cytoplasmic side of the membrane.

This sequence belongs to the G-protein coupled receptor 1 family. Opsin subfamily. Post-translationally, phosphorylated on some or all of the serine and threonine residues present in the C-terminal region. In terms of tissue distribution, the color pigments are found in the cone photoreceptor cells.

The protein localises to the membrane. In terms of biological role, visual pigments are the light-absorbing molecules that mediate vision. They consist of an apoprotein, opsin, covalently linked to cis-retinal. This Gallus gallus (Chicken) protein is Green-sensitive opsin (PRA1).